Here is a 640-residue protein sequence, read N- to C-terminus: Biosynthetic arginine decarboxylase (640 aa).

The residue at position 105 (Lys105) is an N6-(pyridoxal phosphate)lysine. 290–300 (FDVGGGLAIDY) provides a ligand contact to substrate.

Belongs to the Orn/Lys/Arg decarboxylase class-II family. SpeA subfamily. Mg(2+) is required as a cofactor. Pyridoxal 5'-phosphate serves as cofactor.

The catalysed reaction is L-arginine + H(+) = agmatine + CO2. Catalyzes the biosynthesis of agmatine from arginine. This chain is Biosynthetic arginine decarboxylase, found in Vibrio vulnificus (strain CMCP6).